The chain runs to 513 residues: RNA-binding protein FUS (513 aa).

A compositionally biased stretch (polar residues) spans 1-14 (MASNDYTQQATQSY). The segment at 1 to 273 (MASNDYTQQA…SEQDNSDNNT (273 aa)) is disordered. Composition is skewed to low complexity over residues 20 to 36 (QPGQ…YGQQ), 43 to 63 (QSTD…GQTQ), and 84 to 124 (SSQS…SGYG). The span at 125–139 (QPQGGGYGQQSGYGG) shows a compositional bias: gly residues. Residues 140–164 (QQQSYGQQQSYNPPQGYGQQSQYNS) show a composition bias toward low complexity. 2 stretches are compositionally biased toward gly residues: residues 165-176 (SGGGGGGGGGSY) and 185-219 (SGGG…GGGY). Arg-211 and Arg-213 each carry asymmetric dimethylarginine; alternate. Arg-211 and Arg-213 each carry omega-N-methylarginine; alternate. Residues Arg-229, Arg-231, Arg-235, Arg-238, and Arg-246 each carry the asymmetric dimethylarginine modification. The span at 231–246 (RGGGRGGRGGMGGSDR) shows a compositional bias: gly residues. Ser-264 carries the phosphoserine modification. The region spanning 272-358 (NTIFVQGLGE…NPIKVSFATR (87 aa)) is the RRM domain. A Phosphothreonine modification is found at Thr-273. Lys-321 is covalently cross-linked (Glycyl lysine isopeptide (Lys-Gly) (interchain with G-Cter in SUMO2)). Ser-327 carries the phosphoserine modification. 2 disordered regions span residues 362–411 (FNRG…QRAG) and 431–513 (CNQC…ERPY). Residues Arg-364, Arg-370, Arg-373, Arg-375, and Arg-381 each carry the asymmetric dimethylarginine modification. Residues 364-408 (RGGGNGRGGRGRGGPMGRGGYGGGGSGGGGRGGFPSGGGGGGGQQ) are compositionally biased toward gly residues. Arg-394 carries the post-translational modification Asymmetric dimethylarginine; alternate. The residue at position 394 (Arg-394) is an Omega-N-methylarginine; alternate. A RanBP2-type zinc finger spans residues 409–440 (RAGDWKCPNPTCENMNFSWRNECNQCKAPKPD). Residues 441-455 (GPGGGPGGSHMGGNY) show a composition bias toward gly residues. Over residues 456 to 480 (GDDRRGGRGGYDRGGYRGRGGDRGG) the composition is skewed to basic and acidic residues. 8 positions are modified to asymmetric dimethylarginine: Arg-460, Arg-463, Arg-468, Arg-472, Arg-474, Arg-478, Arg-482, and Arg-485. Positions 481–495 (FRGGRGGGDRGGFGP) are enriched in gly residues. Arg-490 is modified (asymmetric dimethylarginine; alternate). An Omega-N-methylarginine; alternate modification is found at Arg-490. Residues 498-513 (MDSRGEHRQDRRERPY) are compositionally biased toward basic and acidic residues.

This sequence belongs to the RRM TET family. In terms of assembly, self-oligomerizes (via N-terminal region). Oligomerization is essential for chromatin binding. Component of nuclear riboprotein complexes. Interacts with ILF3, TDRD3 and SF1. Interacts through its C-terminus with SFRS13A. Interacts with OTUB1 and SARNP. Interacts with LRSAM1. Interacts with SAFB1 in a DNA-dependent manner; this interaction tethers FUS to chromatin. Interacts with MATR3. Interacts with SNRNP70 and POLR2A; these interactions couple RNA transcription and splicing. Interacts (through its RNA-binding domain) with RALY (through its RNA-binding domain); both are components of the same RNPs. In terms of processing, phosphorylated in its N-terminal serine residues upon induced DNA damage. ATM and DNA-PK are able to phosphorylate FUS N-terminal region.

It is found in the nucleus. Its function is as follows. DNA/RNA-binding protein that plays a role in various cellular processes such as transcription regulation, RNA splicing, RNA transport, DNA repair and damage response. Binds to ssRNA containing the consensus sequence 5'-AGGUAA-3'. Binds to nascent pre-mRNAs and acts as a molecular mediator between RNA polymerase II and U1 small nuclear ribonucleoprotein thereby coupling transcription and splicing. Also binds its own pre-mRNA and autoregulates its expression; this autoregulation mechanism is mediated by non-sense-mediated decay. Plays a role in DNA repair mechanisms by promoting D-loop formation and homologous recombination during DNA double-strand break repair. In neuronal cells, plays crucial roles in dendritic spine formation and stability, RNA transport, mRNA stability and synaptic homeostasis. In Bos taurus (Bovine), this protein is RNA-binding protein FUS (FUS).